Here is a 1017-residue protein sequence, read N- to C-terminus: EMILIN-1 (1017 aa).

The first 21 residues, 1 to 21 (MAPRALWSCYLCCLLTIATEA), serve as a signal peptide directing secretion. An EMI domain is found at 56–133 (HRNWCAYVVT…QGYGGDDCGE (78 aa)). Disulfide bonds link Cys60–Cys123, Cys87–Cys94, and Cys122–Cys131. Disordered regions lie at residues 134-180 (GPAS…SEKV) and 259-289 (ELGH…GPSE). The span at 154–167 (RPNLSGSSAGSHLS) shows a compositional bias: low complexity. N-linked (GlcNAc...) asparagine glycosylation is present at Asn156. Coiled-coil stretches lie at residues 171 to 211 (GEGP…LAED), 237 to 266 (ETLS…LNNH), and 310 to 374 (LDGF…DVVT). Residues 383 to 403 (RRGSELGGAAGQGGHPPGYTS) are disordered. Over residues 387–398 (ELGGAAGQGGHP) the composition is skewed to gly residues. Residues Asn416, Asn456, Asn562, and Asn659 are each glycosylated (N-linked (GlcNAc...) asparagine). The stretch at 519 to 573 (LHEAEAAGEAQQAVLEGLQGLLSRLRERMDAQEETAAEILLRLNLTAAQLSQLEG) forms a coiled coil. Residues 676–697 (LADLGATKDSIISEINRLQQEA) adopt a coiled-coil conformation. N-linked (GlcNAc...) asparagine glycans are attached at residues Asn767 and Asn795. Residues 789-809 (RRLGALNNSLLLLEDRLQQLS) adopt a coiled-coil conformation. Residues 811–820 (KDFTGPSGKA) show a composition bias toward low complexity. Residues 811–866 (KDFTGPSGKAGPPGPPGLQGPSGPAGPPGPPGKDGQQGAIGPPGPQGEQGAEGAPA) are disordered. The Collagen-like domain occupies 815–865 (GPSGKAGPPGPPGLQGPSGPAGPPGPPGKDGQQGAIGPPGPQGEQGAEGAP). Pro residues predominate over residues 822–841 (PPGPPGLQGPSGPAGPPGPP). Positions 843–866 (KDGQQGAIGPPGPQGEQGAEGAPA) are enriched in low complexity. In terms of domain architecture, C1q spans 867–1014 (APVPRVAFSA…GALLYEDTEL (148 aa)).

In terms of assembly, homotrimer associated through a moderately stable interaction of the C-terminal globular C1q domains, allowing the nucleation of the triple helix and then a further quaternary assembly to higher-order polymers via intermolecular disulfide bonds. Interacts with EMILIN2. Interacts with EFEMP2; this interaction promotes the incorporation of EFEMP2 into the extracellular matrix.

It is found in the secreted. The protein localises to the extracellular space. The protein resides in the extracellular matrix. Involved in elastic and collagen fibers formation. It is required for EFEMP2 deposition into the extracellular matrix, and collagen network assembly and cross-linking via protein-lysine 6-oxidase/LOX activity. May be responsible for anchoring smooth muscle cells to elastic fibers, and may be involved the processes that regulate vessel assembly. Has cell adhesive capacity. May have a function in placenta formation and initial organogenesis and a later role in interstitial connective tissue. This chain is EMILIN-1 (Emilin1), found in Mus musculus (Mouse).